The following is a 391-amino-acid chain: MVTQNKKILIITGSFGNGHMQVTQSIVNQLNEMNLNHLSVIQHDLFMEAHPIMTSICKKWYINSFKYFRNTYKRFYYSRPNELDKCFYKYYGLNKLINLLIKEKPDLILLTFPTPVMSVLTEQFNINIPIATVMTDYRMHKNWITPYSQRYYVATKDTKDDFIEAGVPASYIKVTGIPIADKFEESIDKEEWLSQQHLDPSKPTILMSAGAFGVSKGFDYMINNILEKSPNSQVVMICGRSKELKRSLKAKFKDNPSVIILGYTNHMNEWMASSQLMITKPGGITISEGLSRCIPMIFLNPAPGQELENAYYFESKGFGKIADTPNEAIDIVSDLTNNEETLKVMSSKMLESKVGYSTRKICKDLLDLIGHSSQPDEIYGKVPLYARFFVK.

It belongs to the glycosyltransferase 28 family. UgtP subfamily.

The protein resides in the cell membrane. It catalyses the reaction a 1,2-diacyl-3-O-(beta-D-glucopyranosyl)-sn-glycerol + UDP-alpha-D-glucose = a 1,2-diacyl-3-O-(beta-D-Glc-(1-&gt;6)-beta-D-Glc)-sn-glycerol + UDP + H(+). It carries out the reaction a 1,2-diacyl-sn-glycerol + UDP-alpha-D-glucose = a 1,2-diacyl-3-O-(beta-D-glucopyranosyl)-sn-glycerol + UDP + H(+). Its pathway is glycolipid metabolism; diglucosyl-diacylglycerol biosynthesis. Processive glucosyltransferase involved in the biosynthesis of both the bilayer- and non-bilayer-forming membrane glucolipids. Is able to successively transfer two glucosyl residues to diacylglycerol (DAG), thereby catalyzing the formation of beta-monoglucosyl-DAG (3-O-(beta-D-glucopyranosyl)-1,2-diacyl-sn-glycerol) and beta-diglucosyl-DAG (3-O-(beta-D-glucopyranosyl-beta-(1-&gt;6)-D-glucopyranosyl)-1,2-diacyl-sn-glycerol). Beta-diglucosyl-DAG is the predominant glycolipid found in Bacillales and is also used as a membrane anchor for lipoteichoic acid (LTA). The sequence is that of Processive diacylglycerol beta-glucosyltransferase from Staphylococcus epidermidis (strain ATCC 35984 / DSM 28319 / BCRC 17069 / CCUG 31568 / BM 3577 / RP62A).